A 500-amino-acid polypeptide reads, in one-letter code: Glycerol kinase (500 aa).

T13 serves as a coordination point for ADP. ATP-binding residues include T13, T14, and S15. T13 serves as a coordination point for sn-glycerol 3-phosphate. An ADP-binding site is contributed by R17. Sn-glycerol 3-phosphate-binding residues include R83, E84, Y135, and D244. Positions 83, 84, 135, 244, and 245 each coordinate glycerol. Residues T266 and G309 each coordinate ADP. The ATP site is built by T266, G309, Q313, and G410. G410 and N414 together coordinate ADP.

Belongs to the FGGY kinase family.

It catalyses the reaction glycerol + ATP = sn-glycerol 3-phosphate + ADP + H(+). Its pathway is polyol metabolism; glycerol degradation via glycerol kinase pathway; sn-glycerol 3-phosphate from glycerol: step 1/1. With respect to regulation, inhibited by fructose 1,6-bisphosphate (FBP). In terms of biological role, key enzyme in the regulation of glycerol uptake and metabolism. Catalyzes the phosphorylation of glycerol to yield sn-glycerol 3-phosphate. The polypeptide is Glycerol kinase (Burkholderia cenocepacia (strain HI2424)).